Reading from the N-terminus, the 70-residue chain is Large ribosomal subunit protein bL28 (70 aa).

Belongs to the bacterial ribosomal protein bL28 family.

In Maridesulfovibrio salexigens (strain ATCC 14822 / DSM 2638 / NCIMB 8403 / VKM B-1763) (Desulfovibrio salexigens), this protein is Large ribosomal subunit protein bL28.